A 263-amino-acid polypeptide reads, in one-letter code: Transcription factor bHLH27 (263 aa).

Over residues 32–47 (EAFSGSGESSSPDGAA) the composition is skewed to low complexity. Residues 32-61 (EAFSGSGESSSPDGAATSPASSKNVVSERN) are disordered. A compositionally biased stretch (polar residues) spans 49-58 (SPASSKNVVS). Residues 50-99 (PASSKNVVSERNRRQKLNQRLFALRSVVPNISKLDKASVIKDSIDYMQEL) enclose the bHLH domain.

In terms of assembly, homodimer. Expressed constitutively in roots, leaves, stems, and flowers.

Its subcellular location is the nucleus. The sequence is that of Transcription factor bHLH27 (BHLH27) from Arabidopsis thaliana (Mouse-ear cress).